The primary structure comprises 188 residues: Segregation and condensation protein B (188 aa).

This sequence belongs to the ScpB family. As to quaternary structure, homodimer. Homodimerization may be required to stabilize the binding of ScpA to the Smc head domains. Component of a cohesin-like complex composed of ScpA, ScpB and the Smc homodimer, in which ScpA and ScpB bind to the head domain of Smc. The presence of the three proteins is required for the association of the complex with DNA.

It is found in the cytoplasm. In terms of biological role, participates in chromosomal partition during cell division. May act via the formation of a condensin-like complex containing Smc and ScpA that pull DNA away from mid-cell into both cell halves. The chain is Segregation and condensation protein B from Streptococcus gordonii (strain Challis / ATCC 35105 / BCRC 15272 / CH1 / DL1 / V288).